A 220-amino-acid chain; its full sequence is Fructose-6-phosphate aldolase (220 aa).

Residue Lys85 is the Schiff-base intermediate with substrate of the active site.

Belongs to the transaldolase family. Type 3A subfamily. As to quaternary structure, homodecamer.

Its subcellular location is the cytoplasm. It catalyses the reaction beta-D-fructose 6-phosphate = dihydroxyacetone + D-glyceraldehyde 3-phosphate. Catalyzes the reversible formation of fructose 6-phosphate from dihydroxyacetone and D-glyceraldehyde 3-phosphate via an aldolization reaction. This chain is Fructose-6-phosphate aldolase, found in Salmonella schwarzengrund (strain CVM19633).